Here is a 36-residue protein sequence, read N- to C-terminus: Photosystem I reaction center subunit VIII (36 aa).

Residues 4–24 (FSLPSILVPLVGLVLPAIAMA) traverse the membrane as a helical segment.

The protein belongs to the PsaI family.

It localises to the plastid. The protein localises to the chloroplast thylakoid membrane. Its function is as follows. May help in the organization of the PsaL subunit. In Piper cenocladum (Ant piper), this protein is Photosystem I reaction center subunit VIII.